The sequence spans 535 residues: MGIVEPGCGDMLTGTEPMPGSDEGRAPGADPQHRYFYPEPGAQDADERRGGGSLGSPYPGGALVPAPPSRFLGAYAYPPRPQAAGFPGAGESFPPPADAEGYQPGEGYAAPDPRAGLYPGPREDYALPAGLEVSGKLRVALNNHLLWSKFNQHQTEMIITKQGRRMFPFLSFTVAGLEPTSHYRMFVDVVLVDQHHWRYQSGKWVQCGKAEGSMPGNRLYVHPDSPNTGAHWMRQEVSFGKLKLTNNKGASNNVTQMIVLQSLHKYQPRLHIVEVNDGEPEAACNASNTHIFTFQETQFIAVTAYQNAEITQLKIDNNPFAKGFRENFESMYTSVDTSIPSPPGPNCQFLGGDHYSPLLPNQYPVPSRFYPDLPGQAKDVVPQAYWLGAPRDHSYEAEFRAVSMKPAFLPSAPGPTMSYYRGQEVLAPGAGWPVAPQYPPKMGPASWFRPMRTLPMEPGPGGSEGRGPEDQGPPLVWTEIAPIRPESSDSGLGEGDSKRRRVSPYPSSGDSSSPAGAPSPFDKEAEGQFYNYFPN.

The segment at 1 to 62 is disordered; sequence MGIVEPGCGD…SLGSPYPGGA (62 aa). Residue Ser53 is modified to Phosphoserine. Tyr77 is subject to Phosphotyrosine. Residues 83–109 form a disordered region; it reads AAGFPGAGESFPPPADAEGYQPGEGYA. Residue Tyr118 is modified to Phosphotyrosine. A DNA-binding region (T-box) is located at residues 141–326; the sequence is LNNHLLWSKF…NNPFAKGFRE (186 aa). At Tyr220 the chain carries Phosphotyrosine; by ABL1. Ser225 carries the post-translational modification Phosphoserine. Tyr266 carries the phosphotyrosine; by ABL1 modification. Residue Thr303 is modified to Phosphothreonine. Tyr305 is modified (phosphotyrosine; by ABL1). Lys314 participates in a covalent cross-link: Glycyl lysine isopeptide (Lys-Gly) (interchain with G-Cter in ubiquitin). The disordered stretch occupies residues 449 to 535; that stretch reads RPMRTLPMEP…EGQFYNYFPN (87 aa). The span at 503 to 520 shows a compositional bias: low complexity; sequence SPYPSSGDSSSPAGAPSP. Phosphoserine is present on Ser513. Tyr530 carries the phosphotyrosine; by ITK modification.

As to quaternary structure, interacts with RUNX1, RUNX3, ITK, ABL1, RELA, CDK9 and KDM6B. The phosphorylated form (at Thr-303) interacts with NFATC2. Interacts with SMARCA4 in a KDM6B-dependent manner. Interacts with CCTN1. Interacts with USP10. The phosphorylated form (at Tyr-530) interacts with GATA3. In terms of processing, phosphorylations at Ser-53, Tyr-77, Ser-225 and Ser-513 are regulated by mTORC1. Phosphorylation at Tyr-530 is essential for its interaction GATA3. Phosphorylation at Tyr-220, Tyr-266 and Tyr-305 enhances its transcriptional activator activity. Phosphorylation at Thr-303 is required for its interaction with NFATC2. Ubiquitinated at Lys-314, leading to its degradation by the proteasome. Ubiquitination is essential for controlling protein stability, binding to the T-box-binding element of the IFN-gamma promoter, and for interaction with NFATC2 through induction of phosphorylation at Thr-303. Deubiquitinated by USP10 leading to its stabilization. T-cell specific.

It localises to the nucleus. Its function is as follows. Lineage-defining transcription factor which initiates Th1 lineage development from naive Th precursor cells both by activating Th1 genetic programs and by repressing the opposing Th2 and Th17 genetic programs. Activates transcription of a set of genes important for Th1 cell function, including those encoding IFN-gamma and the chemokine receptor CXCR3. Induces permissive chromatin accessibilty and CpG methylation in IFNG. Activates IFNG and CXCR3 genes in part by recruiting chromatin remodeling complexes including KDM6B, a SMARCA4-containing SWI/SNF-complex, and an H3K4me2-methyltransferase complex to their promoters and all of these complexes serve to establish a more permissive chromatin state conducive with transcriptional activation. Can activate Th1 genes also via recruitment of Mediator complex and P-TEFb (composed of CDK9 and CCNT1/cyclin-T1) in the form of the super elongation complex (SEC) to super-enhancers and associated genes in activated Th1 cells. Inhibits the Th17 cell lineage commitment by blocking RUNX1-mediated transactivation of Th17 cell-specific transcriptinal regulator RORC. Inhibits the Th2 cell lineage commitment by suppressing the production of Th2 cytokines, such as IL-4, IL-5, and IL- 13, via repression of transcriptional regulators GATA3 and NFATC2. Protects Th1 cells from amplifying aberrant type-I IFN response in an IFN-gamma abundant microenvironment by acting as a repressor of type-I IFN transcription factors and type-I IFN-stimulated genes. Acts as a regulator of antiviral B-cell responses; controls chronic viral infection by promoting the antiviral antibody IgG2a isotype switching and via regulation of a broad antiviral gene expression program. Required for the correct development of natural killer (NK) and mucosal-associated invariant T (MAIT) cells. The polypeptide is T-box transcription factor TBX21 (TBX21) (Homo sapiens (Human)).